The sequence spans 598 residues: Fibulin-1 (598 aa).

Disulfide bonds link Ala-1–Cys-25, Cys-7–Cys-26, Cys-28–Cys-52, Cys-29–Cys-59, Cys-42–Cys-60, Cys-96–Cys-106, Cys-102–Cys-115, Cys-117–Cys-130, Cys-136–Cys-149, Cys-143–Cys-158, Cys-164–Cys-176, Cys-182–Cys-195, Cys-189–Cys-204, Cys-210–Cys-222, Cys-228–Cys-242, Cys-257–Cys-270, Cys-275–Cys-288, Cys-282–Cys-297, Cys-299–Cys-312, Cys-318–Cys-330, Cys-326–Cys-339, Cys-341–Cys-354, Cys-360–Cys-369, Cys-365–Cys-378, Cys-380–Cys-394, Cys-400–Cys-413, Cys-409–Cys-422, Cys-424–Cys-438, Cys-444–Cys-457, Cys-451–Cys-466, and Cys-471–Cys-483. Anaphylatoxin-like domains follow at residues 1–27 (ANEQ…RCCH) and 28–60 (CCLL…RACC). Residue Asn-14 is glycosylated (N-linked (GlcNAc...) asparagine). An EGF-like 1 domain is found at 92 to 131 (LNDRCRGGGPCKQQCRDTGDEVVCSCFVGYQLLSDGVSCE). The EGF-like 2; calcium-binding domain maps to 132–177 (DVNECITGSHSCRLGESCINTVGSFRCQRDSSCGTGYELTEDNSCK). The region spanning 178–223 (DIDQCESGIHNCLPDFICQNTLGSFRCRPKLQCKNGFIQDALANCI) is the EGF-like 3; calcium-binding domain. Positions 224–270 (DINECLSIVSAPCPTGHTCINTEGSYTQKNVPNCGRGYHLNEEGTRC) constitute an EGF-like 4; calcium-binding domain. In terms of domain architecture, EGF-like 5; calcium-binding spans 271–313 (DVNECAPPAEPCGKGHRCVNSPGSFRCECKTGYYFDGISRMCV). The tract at residues 271-355 (DVNECAPPAE…RLSVDGRSCE (85 aa)) is self-association and FN1-binding. Positions 314–355 (DVNECQRYPGRLCGHKCENTLGSYVCSCSVGFRLSVDGRSCE) constitute an EGF-like 6; calcium-binding domain. In terms of domain architecture, EGF-like 7; calcium-binding spans 356 to 395 (DINECSSSPCSQECANVYGSYQCYCRRGYQLSDVDGVTCE). Residues 396–439 (DIDECALPTGGHICSYRCINIPGSFQCSCPASGYRLAPNGRNCQ) enclose the EGF-like 8; calcium-binding domain. Residues 440–484 (DIDECVTGIHNCSINETCFNIQGGFRCLAFECPENYRRSAATRCE) enclose the EGF-like 9; calcium-binding domain. N-linked (GlcNAc...) asparagine glycosylation is found at Asn-450 and Asn-454.

It belongs to the fibulin family. As to quaternary structure, homomultimerizes and interacts with various extracellular matrix components. Interacts with FBLN7. Interacts with the mature/soluble form of DTR. Interacts with CCN3.

The protein localises to the secreted. The protein resides in the extracellular space. It is found in the extracellular matrix. In terms of biological role, incorporated into fibronectin-containing matrix fibers. May play a role in cell adhesion and migration along protein fibers within the extracellular matrix (ECM). Could be important for certain developmental processes and contribute to the supramolecular organization of ECM architecture, in particular to those of basement membranes. May serve to anchor the mature/soluble form of DTR to its fibers as it migrates through the extracellular matrix. The direct physical association with DTR may be useful in such tissue developmental processes as wound healing. In Chlorocebus aethiops (Green monkey), this protein is Fibulin-1 (FBLN1).